The sequence spans 352 residues: Protein-glutamate methylesterase/protein-glutamine glutaminase 2 (352 aa).

Residues 1–116 (MVVDDSAVVR…KQFLTDSADE (116 aa)) enclose the Response regulatory domain. D50 is modified (4-aspartylphosphate). A CheB-type methylesterase domain is found at 162 to 352 (AQTTERIVAI…MAREIVTQLQ (191 aa)). Active-site residues include S174, H200, and D296.

Belongs to the CheB family. Post-translationally, phosphorylated by CheA. Phosphorylation of the N-terminal regulatory domain activates the methylesterase activity.

Its subcellular location is the cytoplasm. The catalysed reaction is [protein]-L-glutamate 5-O-methyl ester + H2O = L-glutamyl-[protein] + methanol + H(+). It catalyses the reaction L-glutaminyl-[protein] + H2O = L-glutamyl-[protein] + NH4(+). Involved in chemotaxis. Part of a chemotaxis signal transduction system that modulates chemotaxis in response to various stimuli. Catalyzes the demethylation of specific methylglutamate residues introduced into the chemoreceptors (methyl-accepting chemotaxis proteins or MCP) by CheR. Also mediates the irreversible deamidation of specific glutamine residues to glutamic acid. The chain is Protein-glutamate methylesterase/protein-glutamine glutaminase 2 from Xanthomonas euvesicatoria pv. vesicatoria (strain 85-10) (Xanthomonas campestris pv. vesicatoria).